The primary structure comprises 107 residues: Putative double-stranded DNA mimic protein YE2228 (107 aa).

The protein belongs to the putative dsDNA mimic protein family.

Its function is as follows. May act as a double-stranded DNA (dsDNA) mimic. Probably regulates the activity of a dsDNA-binding protein. The chain is Putative double-stranded DNA mimic protein YE2228 from Yersinia enterocolitica serotype O:8 / biotype 1B (strain NCTC 13174 / 8081).